The chain runs to 313 residues: Thiamine thiazole synthase (313 aa).

Residues Ala71, 92–93 (EA), Gly100, and Val165 each bind substrate. 2,3-didehydroalanine (Cys) is present on Cys199. Substrate is bound by residues Asp201, His216, Met268, and 278–280 (RMG).

It belongs to the THI4 family. Homooctamer. Fe cation serves as cofactor. In terms of processing, during the catalytic reaction, a sulfide is transferred from Cys-199 to a reaction intermediate, generating a dehydroalanine residue.

Its subcellular location is the cytoplasm. The protein localises to the nucleus. The enzyme catalyses [ADP-thiazole synthase]-L-cysteine + glycine + NAD(+) = [ADP-thiazole synthase]-dehydroalanine + ADP-5-ethyl-4-methylthiazole-2-carboxylate + nicotinamide + 3 H2O + 2 H(+). Involved in biosynthesis of the thiamine precursor thiazole. Catalyzes the conversion of NAD and glycine to adenosine diphosphate 5-(2-hydroxyethyl)-4-methylthiazole-2-carboxylic acid (ADT), an adenylated thiazole intermediate. The reaction includes an iron-dependent sulfide transfer from a conserved cysteine residue of the protein to a thiazole intermediate. The enzyme can only undergo a single turnover, which suggests it is a suicide enzyme. May have additional roles in adaptation to various stress conditions and in DNA damage tolerance. In Coprinopsis cinerea (strain Okayama-7 / 130 / ATCC MYA-4618 / FGSC 9003) (Inky cap fungus), this protein is Thiamine thiazole synthase.